The chain runs to 320 residues: Heterogeneous nuclear ribonucleoprotein A1-like 2 (320 aa).

The globular A domain stretch occupies residues 4–94; it reads SASPKEPEQL…EPKRAVSRED (91 aa). Phosphoserine is present on residues Ser-6 and Ser-22. 2 consecutive RRM domains span residues 14–97 and 105–184; these read RKLF…DSQR and KKIF…LPKQ. The segment at 95–185 is globular B domain; it reads SQRPGAHLTV…EVRKALPKQE (91 aa). Residues 181–216 form a disordered region; it reads LPKQEMASASSSQRGRRGSGNFGGGRGDGFGGNDNF. Asymmetric dimethylarginine; alternate is present on residues Arg-194, Arg-206, Arg-218, and Arg-225. Omega-N-methylarginine; alternate is present on residues Arg-194, Arg-206, Arg-218, and Arg-225. Positions 198-216 are enriched in gly residues; it reads GSGNFGGGRGDGFGGNDNF. Positions 218 to 240 are RNA-binding RGG-box; the sequence is RGGNFSGRGGFGGSCGGGGYGGS. The segment at 268 to 305 is nuclear targeting sequence; the sequence is NQSSNFGPMKGGNFGGRSSGPYGGGGQYFAKPQNQGGY. Positions 271–320 are disordered; sequence SNFGPMKGGNFGGRSSGPYGGGGQYFAKPQNQGGYGVSSSSSSYGSGRRF. The span at 276–294 shows a compositional bias: gly residues; it reads MKGGNFGGRSSGPYGGGGQ. Residue Arg-284 is modified to Omega-N-methylarginine. Lys-298 is subject to N6-acetyllysine. Low complexity predominate over residues 307-320; sequence VSSSSSSYGSGRRF.

The protein resides in the nucleus. It localises to the cytoplasm. Involved in the packaging of pre-mRNA into hnRNP particles, transport of poly(A) mRNA from the nucleus to the cytoplasm and may modulate splice site selection. In Homo sapiens (Human), this protein is Heterogeneous nuclear ribonucleoprotein A1-like 2 (HNRNPA1L2).